We begin with the raw amino-acid sequence, 257 residues long: Transmembrane protein 101 (257 aa).

8 helical membrane-spanning segments follow: residues 21-40, 52-72, 77-97, 110-130, 139-159, 182-202, 206-226, and 233-253; these read VLLT…LYAE, VPYL…MSFG, WFAL…YVGG, YSRT…AGEL, SLQS…AYSL, LFFV…YVTL, ILAV…AYWH, and FWNQ…AVIL.

It localises to the membrane. May activate NF-kappa-B signaling pathways. The protein is Transmembrane protein 101 (TMEM101) of Bos taurus (Bovine).